A 180-amino-acid polypeptide reads, in one-letter code: Small ribosomal subunit protein uS4 (180 aa).

The S4 RNA-binding domain occupies 103 to 165; that stretch reads RRLQTIVYRK…KGSPFAKEGH (63 aa).

It belongs to the universal ribosomal protein uS4 family. Part of the 30S ribosomal subunit. Contacts protein S5. The interaction surface between S4 and S5 is involved in control of translational fidelity.

Functionally, one of the primary rRNA binding proteins, it binds directly to 16S rRNA where it nucleates assembly of the body of the 30S subunit. In terms of biological role, with S5 and S12 plays an important role in translational accuracy. This is Small ribosomal subunit protein uS4 from Thermococcus kodakarensis (strain ATCC BAA-918 / JCM 12380 / KOD1) (Pyrococcus kodakaraensis (strain KOD1)).